Here is a 143-residue protein sequence, read N- to C-terminus: Ribosome maturation factor RimP (143 aa).

Belongs to the RimP family.

Its subcellular location is the cytoplasm. Functionally, required for maturation of 30S ribosomal subunits. This Borrelia recurrentis (strain A1) protein is Ribosome maturation factor RimP.